The chain runs to 90 residues: Cell division topological specificity factor (90 aa).

The protein belongs to the MinE family.

Functionally, prevents the cell division inhibition by proteins MinC and MinD at internal division sites while permitting inhibition at polar sites. This ensures cell division at the proper site by restricting the formation of a division septum at the midpoint of the long axis of the cell. The protein is Cell division topological specificity factor of Brucella abortus (strain S19).